The sequence spans 699 residues: MEVHELFRYFRMPELIDIRQYVRTLPTNTLMGFGAFAALTTFWYATRPKALKPPCDLSMQSVEVTGTTEGVRRSAVLEDDKLLLYYYDDVRTMYDGFQRGIQVSNDGPCLGSRKPNQPYEWISYKQVAEMAECIGSALIQKGFKPCSEQFIGIFSQNRPEWVTIEQGCFTYSMVVVPLYDTLGTDAITYIVNKAELSVIFADKPEKAKLLLEGVENKLTPCLKIIVIMDSYDNDLVERGQKCGVEIIGLKALEDLGRVNRTKPKPPEPEDLAIICFTSGTTGNPKGAMVTHQNIMNDCSGFIKATESAFIASPEDVLISFLPLAHMFETVVECVMLCHGAKIGFFQGDIRLLMDDLKVLQPTIFPVVPRLLNRMFDRIFGQANTSVKRWLLDFASKRKEAELRSGIVRNNSLWDKLIFHKIQSSLGGKVRLMITGAAPVSATVLTFLRAALGCQFYEGYGQTECTAGCCLSLPGDWTAGHVGAPMPCNYIKLVDVEDMNYQAAKGEGEVCVKGANVFKGYLKDPARTAEALDKDGWLHTGDIGKWLPNGTLKIIDRKKHIFKLAQGEYIAPEKIENIYLRSEAVAQVFVHGESLQAFLIAIVVPDVEILPSWAQKRGFQGSFEELCRNKDINKAILEDMVKLGKNAGLKPFEQVKGIAVHPELFSIDNGLLTPTLKAKRPELRNYFRSQIDELYSTIKI.

M1 carries the post-translational modification N-acetylmethionine. Y9 is subject to 3'-nitrotyrosine. A helical; Signal-anchor for type III membrane protein membrane pass occupies residues 25–45; it reads LPTNTLMGFGAFAALTTFWYA. Residues 46–699 lie on the Cytoplasmic side of the membrane; the sequence is TRPKALKPPC…IDELYSTIKI (654 aa). Y85 carries the post-translational modification Phosphotyrosine. Residue Y86 is modified to 3'-nitrotyrosine. S136 carries O-linked (GlcNAc) serine glycosylation. 3 positions are modified to N6-acetyllysine: K208, K357, and K387. S621 bears the Phosphoserine mark. K633 carries the post-translational modification N6-acetyllysine.

Belongs to the ATP-dependent AMP-binding enzyme family. It depends on Mg(2+) as a cofactor. Liver, heart, epididymal adipose and to a lesser extent brain, small intestine and lung.

It is found in the mitochondrion outer membrane. The protein resides in the peroxisome membrane. The protein localises to the microsome membrane. Its subcellular location is the endoplasmic reticulum membrane. The enzyme catalyses a long-chain fatty acid + ATP + CoA = a long-chain fatty acyl-CoA + AMP + diphosphate. It carries out the reaction (5Z,8Z,11Z,14Z)-eicosatetraenoate + ATP + CoA = (5Z,8Z,11Z,14Z)-eicosatetraenoyl-CoA + AMP + diphosphate. It catalyses the reaction 3,7,11,15-tetramethylhexadecanoate + ATP + CoA = phytanoyl-CoA + AMP + diphosphate. The catalysed reaction is hexadecanoate + ATP + CoA = hexadecanoyl-CoA + AMP + diphosphate. The enzyme catalyses (E)-hexadec-2-enoate + ATP + CoA = (2E)-hexadecenoyl-CoA + AMP + diphosphate. It carries out the reaction 2,6,10,14-tetramethylpentadecanoate + ATP + CoA = pristanoyl-CoA + AMP + diphosphate. It catalyses the reaction 14,15-epoxy-(5Z,8Z,11Z)-eicosatrienoate + ATP + CoA = 14,15-epoxy-(5Z,8Z,11Z)-eicosatrienoyl-CoA + AMP + diphosphate. The catalysed reaction is 5-hydroxy-(6E,8Z,11Z,14Z)-eicosatetraenoate + ATP + CoA = 5-hydroxy-(6E,8Z,11Z,14Z)-eicosatetraenoyl-CoA + AMP + diphosphate. The enzyme catalyses 12-hydroxy-(5Z,8Z,10E,14Z)-eicosatetraenoate + ATP + CoA = 12-hydroxy-(5Z,8Z,10E,14Z)-eicosatetraenoyl-CoA + AMP + diphosphate. It carries out the reaction 15-hydroxy-(5Z,8Z,11Z,13E)-eicosatetraenoate + ATP + CoA = 15-hydroxy-(5Z,8Z,11Z,13E)-eicosatetraenoyl-CoA + AMP + diphosphate. It catalyses the reaction (9Z)-octadecenoate + ATP + CoA = (9Z)-octadecenoyl-CoA + AMP + diphosphate. With respect to regulation, inhibited at high temperature and by arachidonate. Catalyzes the conversion of long-chain fatty acids to their active form acyl-CoAs for both synthesis of cellular lipids, and degradation via beta-oxidation. Preferentially uses palmitoleate, oleate and linoleate. Preferentially activates arachidonate than epoxyeicosatrienoic acids (EETs) or hydroxyeicosatrienoic acids (HETEs). This is Long-chain-fatty-acid--CoA ligase 1 from Rattus norvegicus (Rat).